Consider the following 427-residue polypeptide: Trigger factor (427 aa).

The PPIase FKBP-type domain occupies 163 to 248; the sequence is GNIAIIDFKG…VKGIKAKELP (86 aa).

This sequence belongs to the FKBP-type PPIase family. Tig subfamily.

It localises to the cytoplasm. It catalyses the reaction [protein]-peptidylproline (omega=180) = [protein]-peptidylproline (omega=0). Involved in protein export. Acts as a chaperone by maintaining the newly synthesized protein in an open conformation. Functions as a peptidyl-prolyl cis-trans isomerase. This Clostridium botulinum (strain Eklund 17B / Type B) protein is Trigger factor.